The primary structure comprises 69 residues: MARVTVEDCLEKVDNRFLLVMLASKRVKQLFKGAKPLIDNRAANKNVVVSLREIAAGKVNFEISSRKSR.

Belongs to the RNA polymerase subunit omega family. The RNAP catalytic core consists of 2 alpha, 1 beta, 1 beta' and 1 omega subunit. When a sigma factor is associated with the core the holoenzyme is formed, which can initiate transcription.

It carries out the reaction RNA(n) + a ribonucleoside 5'-triphosphate = RNA(n+1) + diphosphate. Functionally, promotes RNA polymerase assembly. Latches the N- and C-terminal regions of the beta' subunit thereby facilitating its interaction with the beta and alpha subunits. This is DNA-directed RNA polymerase subunit omega from Geotalea daltonii (strain DSM 22248 / JCM 15807 / FRC-32) (Geobacter daltonii).